The primary structure comprises 127 residues: Fluoride-specific ion channel FluC (127 aa).

Helical transmembrane passes span 1–21 (MMSY…RHMV), 32–52 (EFPF…GAVV), 71–91 (TGIL…VLLY), and 96–116 (VFLA…ALLL). Positions 75 and 78 each coordinate Na(+).

Belongs to the fluoride channel Fluc/FEX (TC 1.A.43) family.

Its subcellular location is the cell inner membrane. The catalysed reaction is fluoride(in) = fluoride(out). With respect to regulation, na(+) is not transported, but it plays an essential structural role and its presence is essential for fluoride channel function. Fluoride-specific ion channel. Important for reducing fluoride concentration in the cell, thus reducing its toxicity. The polypeptide is Fluoride-specific ion channel FluC (Granulibacter bethesdensis (strain ATCC BAA-1260 / CGDNIH1)).